The primary structure comprises 92 residues: Signal peptidase complex subunit 1 (92 aa).

At 1–12 the chain is on the cytoplasmic side; it reads MDWQGQKLVEQL. A helical membrane pass occupies residues 13-30; it reads MQILLVISGVVAVVVGYT. The Lumenal portion of the chain corresponds to 31-36; it reads TESFRT. A helical membrane pass occupies residues 37–59; the sequence is MMLIYAGGVVLTTLVTVPNWPFY. The Cytoplasmic portion of the chain corresponds to 60-92; the sequence is NLHPLKWLDPSEAEKHPKPEVVSVASKKKFSKK. The interval 73–92 is disordered; it reads EKHPKPEVVSVASKKKFSKK.

The protein belongs to the SPCS1 family. As to quaternary structure, component of the signal peptidase complex (SPC) composed of a catalytic subunit SEC11 and three accessory subunits SPCS1, SPCS2 and SPCS3. The complex induces a local thinning of the ER membrane which is used to measure the length of the signal peptide (SP) h-region of protein substrates. This ensures the selectivity of the complex towards h-regions shorter than 18-20 amino acids.

The protein localises to the endoplasmic reticulum membrane. Component of the signal peptidase complex (SPC) which catalyzes the cleavage of N-terminal signal sequences from nascent proteins as they are translocated into the lumen of the endoplasmic reticulum. Dispensable for SPC enzymatic activity. In Arabidopsis thaliana (Mouse-ear cress), this protein is Signal peptidase complex subunit 1.